The primary structure comprises 290 residues: GTPase Era (290 aa).

Residues K2–Q144 enclose the Era-type G domain. The G1 stretch occupies residues G10–S17. G10 to S17 contacts GTP. The G2 stretch occupies residues N36–L40. The G3 stretch occupies residues D58 to G61. A GTP-binding site is contributed by D58 to F62. Residues N97 to E100 are G4. The tract at residues I121–K123 is G5. N122–H125 lines the GTP pocket. Residues C201–K279 enclose the KH type-2 domain.

It belongs to the TRAFAC class TrmE-Era-EngA-EngB-Septin-like GTPase superfamily. Era GTPase family. In terms of assembly, monomer.

The protein resides in the cytoplasm. The protein localises to the cell membrane. An essential GTPase that binds both GDP and GTP, with rapid nucleotide exchange. Plays a role in 16S rRNA processing and 30S ribosomal subunit biogenesis and possibly also in cell cycle regulation and energy metabolism. This is GTPase Era from Mycoplasma genitalium (strain ATCC 33530 / DSM 19775 / NCTC 10195 / G37) (Mycoplasmoides genitalium).